Reading from the N-terminus, the 220-residue chain is MNGFTPDEMSRGGDAAAAVAAVVAAAAAAASAGNGTGAGTGAEVPGAGAVSAAGPPGAAGPGPGQLCCLREDGERCGRAAGNASFSKRIQKSISQKKVKIELDKSARHLYICDYHKNLIQSVRNRRKRKGSDDDGGDSPVQDIDTPEVDLYQLQVNTLRRYKRHFKLPTRPGLNKAQLVEIVGCHFRSIPVNEKDTLTYFIYSVKNDKNKSDLKVDSGVH.

The segment at M1–K129 is interaction with NCOR1. T5 is subject to Phosphothreonine. Residues C67–H115 form an Atypical zinc finger. K87 participates in a covalent cross-link: Glycyl lysine isopeptide (Lys-Gly) (interchain with G-Cter in SUMO2). Residues R123 to I143 form a disordered region. The segment at G130–H220 is interaction with SIN3A. Phosphoserine occurs at positions 131 and 138. T145 is modified (phosphothreonine). Glycyl lysine isopeptide (Lys-Gly) (interchain with G-Cter in SUMO2) cross-links involve residues K194, K205, and K214.

It belongs to the SAP30 family. As to quaternary structure, component of the histone deacetylase complex that includes at least SIN3A, HDAC1 and HDAC2. Found in a complex composed of at least SINHCAF, SIN3A, HDAC1, SAP30, RBBP4, OGT and TET1. Interacts with HDAC1. Interacts with SIN3A, SIN3B, HDAC2, RBBP4 and NCOR1. Interacts with SAMSN1. Interacts with HCFC1. Interacts with SAP30BP. As to expression, expressed in all tissues tested with highest levels in pancreas, ovary, PBL, spleen and thymus; lowest levels in brain, placenta, lung and kidney.

It localises to the nucleus. Involved in the functional recruitment of the Sin3-histone deacetylase complex (HDAC) to a specific subset of N-CoR corepressor complexes. Capable of transcription repression by N-CoR. Active in deacetylating core histone octamers (when in a complex) but inactive in deacetylating nucleosomal histones. In terms of biological role, (Microbial infection) Involved in transcriptional repression of HHV-1 genes TK and gC. In Homo sapiens (Human), this protein is Histone deacetylase complex subunit SAP30.